Here is a 325-residue protein sequence, read N- to C-terminus: Probable cell division protein WhiA (325 aa).

The segment at residues 273–306 (SLEELGALADPPLTKDAVAGRIRRLLALADKRAN) is a DNA-binding region (H-T-H motif).

Belongs to the WhiA family.

In terms of biological role, involved in cell division and chromosome segregation. This chain is Probable cell division protein WhiA, found in Frankia casuarinae (strain DSM 45818 / CECT 9043 / HFP020203 / CcI3).